Consider the following 362-residue polypeptide: Ribosome-binding ATPase YchF (362 aa).

Residues 3 to 255 form the OBG-type G domain; that stretch reads FKCGIIGLPN…MSDEEKKSFM (253 aa). 12 to 17 lines the ATP pocket; that stretch reads NVGKST. Residues serine 16 and threonine 36 each contribute to the Mg(2+) site. The 84-residue stretch at 277–360 folds into the TGS domain; the sequence is NLITFFTVGD…QDGDIIHFLF (84 aa).

It belongs to the TRAFAC class OBG-HflX-like GTPase superfamily. OBG GTPase family. YchF/OLA1 subfamily. It depends on Mg(2+) as a cofactor.

Its function is as follows. ATPase that binds to both the 70S ribosome and the 50S ribosomal subunit in a nucleotide-independent manner. This chain is Ribosome-binding ATPase YchF, found in Buchnera aphidicola subsp. Acyrthosiphon pisum (strain APS) (Acyrthosiphon pisum symbiotic bacterium).